The primary structure comprises 322 residues: N-acetyl-gamma-glutamyl-phosphate reductase (322 aa).

Residue Cys-132 is part of the active site.

The protein belongs to the NAGSA dehydrogenase family. Type 1 subfamily.

It is found in the cytoplasm. The catalysed reaction is N-acetyl-L-glutamate 5-semialdehyde + phosphate + NADP(+) = N-acetyl-L-glutamyl 5-phosphate + NADPH + H(+). It functions in the pathway amino-acid biosynthesis; L-arginine biosynthesis; N(2)-acetyl-L-ornithine from L-glutamate: step 3/4. In terms of biological role, catalyzes the NADPH-dependent reduction of N-acetyl-5-glutamyl phosphate to yield N-acetyl-L-glutamate 5-semialdehyde. The protein is N-acetyl-gamma-glutamyl-phosphate reductase of Bacteroides fragilis (strain ATCC 25285 / DSM 2151 / CCUG 4856 / JCM 11019 / LMG 10263 / NCTC 9343 / Onslow / VPI 2553 / EN-2).